Here is a 183-residue protein sequence, read N- to C-terminus: Large ribosomal subunit protein uL5 (183 aa).

The protein belongs to the universal ribosomal protein uL5 family. In terms of assembly, part of the 50S ribosomal subunit; part of the 5S rRNA/L5/L18/L25 subcomplex. Contacts the 5S rRNA and the P site tRNA. Forms a bridge to the 30S subunit in the 70S ribosome.

In terms of biological role, this is one of the proteins that bind and probably mediate the attachment of the 5S RNA into the large ribosomal subunit, where it forms part of the central protuberance. In the 70S ribosome it contacts protein S13 of the 30S subunit (bridge B1b), connecting the 2 subunits; this bridge is implicated in subunit movement. Contacts the P site tRNA; the 5S rRNA and some of its associated proteins might help stabilize positioning of ribosome-bound tRNAs. The polypeptide is Large ribosomal subunit protein uL5 (Leptospira biflexa serovar Patoc (strain Patoc 1 / Ames)).